The chain runs to 362 residues: Protein OCA4 (362 aa).

Functionally, required for replication of Brome mosaic virus (BMV). In Saccharomyces cerevisiae (strain ATCC 204508 / S288c) (Baker's yeast), this protein is Protein OCA4 (OCA4).